A 267-amino-acid polypeptide reads, in one-letter code: Thiamine thiazole synthase (267 aa).

NAD(+) is bound by residues Ser41, 60 to 61, Gly68, Val132, and 160 to 162; these read ER and HVD. The Fe cation site is built by Asp162 and His177. Residue Met227 participates in NAD(+) binding. A glycine-binding site is contributed by Arg237.

This sequence belongs to the THI4 family. As to quaternary structure, homooctamer; tetramer of dimers. It depends on Fe(2+) as a cofactor.

It catalyses the reaction hydrogen sulfide + glycine + NAD(+) = ADP-5-ethyl-4-methylthiazole-2-carboxylate + nicotinamide + 3 H2O + H(+). Its pathway is cofactor biosynthesis; thiamine diphosphate biosynthesis. In terms of biological role, involved in the biosynthesis of the thiazole moiety of thiamine. Catalyzes the conversion of NAD and glycine to adenosine diphosphate 5-(2-hydroxyethyl)-4-methylthiazole-2-carboxylate (ADT), an adenylated thiazole intermediate, using free sulfide as a source of sulfur. The protein is Thiamine thiazole synthase of Saccharolobus solfataricus (strain ATCC 35092 / DSM 1617 / JCM 11322 / P2) (Sulfolobus solfataricus).